A 364-amino-acid polypeptide reads, in one-letter code: Fructose-bisphosphate aldolase C (364 aa).

Residue tyrosine 5 is modified to Phosphotyrosine. Phosphoserine is present on residues serine 36, serine 39, and serine 45. Arginine 56 is a binding site for substrate. Lysine 111 carries the post-translational modification N6-acetyllysine. Serine 132 is subject to Phosphoserine. Lysine 147 contributes to the substrate binding site. Glutamate 188 (proton acceptor) is an active-site residue. Lysine 230 functions as the Schiff-base intermediate with dihydroxyacetone-P in the catalytic mechanism.

Belongs to the class I fructose-bisphosphate aldolase family. As to quaternary structure, homotetramer. Interacts with ATP6V1E1.

The enzyme catalyses beta-D-fructose 1,6-bisphosphate = D-glyceraldehyde 3-phosphate + dihydroxyacetone phosphate. It functions in the pathway carbohydrate degradation; glycolysis; D-glyceraldehyde 3-phosphate and glycerone phosphate from D-glucose: step 4/4. The sequence is that of Fructose-bisphosphate aldolase C (ALDOC) from Macaca fascicularis (Crab-eating macaque).